Reading from the N-terminus, the 269-residue chain is MTHLERSRHQQHPFHMVMPSPWPIVVSFALLSLALSTALTMHGYIGNMNMVYLALFVLLTSSILWFRDIVAEATYLGDHTMAVRKGINLGFLMFVLSEVLIFAGLFWAYFHSAMSPDVTLGACWPPVGIEAVQPTELPLLNTIILLSSGATVTYSHHALIAGNRNKALSGLLITFWLIVIFVTCQYIEYTNAAFTISDGVYGSVFYAGTGLHFLHMVMLAAMLGVNYWRMRNYHLTAGHHVGYETTIIYTHVLDVIWLFLYVVFYWWGV.

Topologically, residues 1-22 are mitochondrial matrix; the sequence is MTHLERSRHQQHPFHMVMPSPW. The helical transmembrane segment at 23–41 threads the bilayer; the sequence is PIVVSFALLSLALSTALTM. The Mitochondrial intermembrane segment spans residues 42 to 48; the sequence is HGYIGNM. Residues 49 to 73 form a helical membrane-spanning segment; that stretch reads NMVYLALFVLLTSSILWFRDIVAEA. The Mitochondrial matrix portion of the chain corresponds to 74–80; it reads TYLGDHT. A helical transmembrane segment spans residues 81–114; the sequence is MAVRKGINLGFLMFVLSEVLIFAGLFWAYFHSAM. At 115–137 the chain is on the mitochondrial intermembrane side; sequence SPDVTLGACWPPVGIEAVQPTEL. The helical transmembrane segment at 138–161 threads the bilayer; sequence PLLNTIILLSSGATVTYSHHALIA. The Mitochondrial matrix portion of the chain corresponds to 162–164; sequence GNR. The helical transmembrane segment at 165–188 threads the bilayer; sequence NKALSGLLITFWLIVIFVTCQYIE. The Mitochondrial intermembrane portion of the chain corresponds to 189-201; the sequence is YTNAAFTISDGVY. The helical transmembrane segment at 202-230 threads the bilayer; it reads GSVFYAGTGLHFLHMVMLAAMLGVNYWRM. The Mitochondrial matrix segment spans residues 231 to 248; the sequence is RNYHLTAGHHVGYETTII. Residues 249-265 form a helical membrane-spanning segment; that stretch reads YTHVLDVIWLFLYVVFY. The Mitochondrial intermembrane portion of the chain corresponds to 266 to 269; it reads WWGV.

It belongs to the cytochrome c oxidase subunit 3 family. Component of the cytochrome c oxidase (complex IV, CIV), a multisubunit enzyme composed of 12 subunits. The complex is composed of a catalytic core of 3 subunits COX1, COX2 and COX3, encoded in the mitochondrial DNA, and 9 supernumerary subunits COX4, COX5A (or COX5B), COX6, COX7, COX8, COX9, COX12, COX13 and COX26, which are encoded in the nuclear genome. The complex exists as a monomer or a dimer and forms supercomplexes (SCs) in the inner mitochondrial membrane with a dimer of ubiquinol-cytochrome c oxidoreductase (cytochrome b-c1 complex, complex III, CIII), resulting in 2 different assemblies (supercomplexes III(2)IV and III(2)IV(2)). Post-translationally, the N-terminus is blocked.

The protein localises to the mitochondrion inner membrane. It catalyses the reaction 4 Fe(II)-[cytochrome c] + O2 + 8 H(+)(in) = 4 Fe(III)-[cytochrome c] + 2 H2O + 4 H(+)(out). In terms of biological role, component of the cytochrome c oxidase, the last enzyme in the mitochondrial electron transport chain which drives oxidative phosphorylation. The respiratory chain contains 3 multisubunit complexes succinate dehydrogenase (complex II, CII), ubiquinol-cytochrome c oxidoreductase (cytochrome b-c1 complex, complex III, CIII) and cytochrome c oxidase (complex IV, CIV), that cooperate to transfer electrons derived from NADH and succinate to molecular oxygen, creating an electrochemical gradient over the inner membrane that drives transmembrane transport and the ATP synthase. Cytochrome c oxidase is the component of the respiratory chain that catalyzes the reduction of oxygen to water. Electrons originating from reduced cytochrome c in the intermembrane space (IMS) are transferred via the dinuclear copper A center (CU(A)) of COX2 and heme A of COX1 to the active site in COX1, a binuclear center (BNC) formed by heme A3 and copper B (CU(B)). The BNC reduces molecular oxygen to 2 water molecules using 4 electrons from cytochrome c in the IMS and 4 protons from the mitochondrial matrix. COX3 is a catalytic core subunit. The protein is Cytochrome c oxidase subunit 3 (COX3) of Saccharomyces cerevisiae (strain ATCC 204508 / S288c) (Baker's yeast).